Consider the following 109-residue polypeptide: Phosphoribosyl-ATP pyrophosphatase (109 aa).

The protein belongs to the PRA-PH family.

The protein resides in the cytoplasm. It catalyses the reaction 1-(5-phospho-beta-D-ribosyl)-ATP + H2O = 1-(5-phospho-beta-D-ribosyl)-5'-AMP + diphosphate + H(+). It functions in the pathway amino-acid biosynthesis; L-histidine biosynthesis; L-histidine from 5-phospho-alpha-D-ribose 1-diphosphate: step 2/9. The sequence is that of Phosphoribosyl-ATP pyrophosphatase from Parvibaculum lavamentivorans (strain DS-1 / DSM 13023 / NCIMB 13966).